A 130-amino-acid polypeptide reads, in one-letter code: Small ribosomal subunit protein uS9 (130 aa).

The protein belongs to the universal ribosomal protein uS9 family.

This chain is Small ribosomal subunit protein uS9, found in Cupriavidus pinatubonensis (strain JMP 134 / LMG 1197) (Cupriavidus necator (strain JMP 134)).